Consider the following 451-residue polypeptide: Trigger factor (451 aa).

The 86-residue stretch at 165 to 250 (DDKLTIDFEG…LRQIQVREAL (86 aa)) folds into the PPIase FKBP-type domain.

The protein belongs to the FKBP-type PPIase family. Tig subfamily.

The protein resides in the cytoplasm. The catalysed reaction is [protein]-peptidylproline (omega=180) = [protein]-peptidylproline (omega=0). Functionally, involved in protein export. Acts as a chaperone by maintaining the newly synthesized protein in an open conformation. Functions as a peptidyl-prolyl cis-trans isomerase. The sequence is that of Trigger factor (tig) from Helicobacter pylori (strain J99 / ATCC 700824) (Campylobacter pylori J99).